A 126-amino-acid chain; its full sequence is UPF0102 protein DNO_0639 (126 aa).

Belongs to the UPF0102 family.

The protein is UPF0102 protein DNO_0639 of Dichelobacter nodosus (strain VCS1703A).